The following is a 390-amino-acid chain: Methylthioribose-1-phosphate isomerase (390 aa).

Residue Asp258 is the Proton donor of the active site.

It belongs to the eIF-2B alpha/beta/delta subunits family. MtnA subfamily.

The protein resides in the cytoplasm. It localises to the nucleus. It carries out the reaction 5-(methylsulfanyl)-alpha-D-ribose 1-phosphate = 5-(methylsulfanyl)-D-ribulose 1-phosphate. It functions in the pathway amino-acid biosynthesis; L-methionine biosynthesis via salvage pathway; L-methionine from S-methyl-5-thio-alpha-D-ribose 1-phosphate: step 1/6. Catalyzes the interconversion of methylthioribose-1-phosphate (MTR-1-P) into methylthioribulose-1-phosphate (MTRu-1-P). The polypeptide is Methylthioribose-1-phosphate isomerase (Coccidioides posadasii (strain C735) (Valley fever fungus)).